Here is a 344-residue protein sequence, read N- to C-terminus: Protein-arginine kinase (344 aa).

Residues I14 to A244 form the Phosphagen kinase C-terminal domain. ATP is bound by residues S17 to R21, H81, R115, R166 to M170, and R197 to E202.

It belongs to the ATP:guanido phosphotransferase family.

It carries out the reaction L-arginyl-[protein] + ATP = N(omega)-phospho-L-arginyl-[protein] + ADP + H(+). Functionally, catalyzes the specific phosphorylation of arginine residues in proteins. The chain is Protein-arginine kinase from Clostridium novyi (strain NT).